Here is a 750-residue protein sequence, read N- to C-terminus: Photosystem I P700 chlorophyll a apoprotein A1 (750 aa).

The next 8 helical transmembrane spans lie at 70 to 93 (VFSAHFGQLSIIFLWLSGMYFHGA), 156 to 179 (LYCTAIGALVFAALMLFAGWFHYH), 195 to 219 (LNHHLAGLLGLGSLSWAGHQVHVSL), 291 to 309 (IAHHHLAIAILFLVAGHMY), 346 to 369 (WHAQLSLNLAMLGSLTIVVAHHMY), 385 to 411 (LSLFTHHMWIGGFLIVGAAAHAAIFMV), 433 to 455 (AIISHLNWVCIFLGFHSFGLYIH), and 531 to 549 (FLVHHIHAFTIHVTVLILL). Positions 573 and 582 each coordinate [4Fe-4S] cluster. The next 2 membrane-spanning stretches (helical) occupy residues 589–610 (HVFLGLFWMYNAISVVIFHFSW) and 664–686 (LSAYGLFFLGAHFVWAFSLMFLF). His675 serves as a coordination point for chlorophyll a'. Positions 683 and 691 each coordinate chlorophyll a. Trp692 is a phylloquinone binding site. Residues 724 to 744 (AVGVTHYLLGGIATTWAFFLA) traverse the membrane as a helical segment.

Belongs to the PsaA/PsaB family. As to quaternary structure, the PsaA/B heterodimer binds the P700 chlorophyll special pair and subsequent electron acceptors. PSI consists of a core antenna complex that captures photons, and an electron transfer chain that converts photonic excitation into a charge separation. The eukaryotic PSI reaction center is composed of at least 11 subunits. It depends on P700 is a chlorophyll a/chlorophyll a' dimer, A0 is one or more chlorophyll a, A1 is one or both phylloquinones and FX is a shared 4Fe-4S iron-sulfur center. as a cofactor.

The protein localises to the plastid. Its subcellular location is the chloroplast thylakoid membrane. It carries out the reaction reduced [plastocyanin] + hnu + oxidized [2Fe-2S]-[ferredoxin] = oxidized [plastocyanin] + reduced [2Fe-2S]-[ferredoxin]. Functionally, psaA and PsaB bind P700, the primary electron donor of photosystem I (PSI), as well as the electron acceptors A0, A1 and FX. PSI is a plastocyanin-ferredoxin oxidoreductase, converting photonic excitation into a charge separation, which transfers an electron from the donor P700 chlorophyll pair to the spectroscopically characterized acceptors A0, A1, FX, FA and FB in turn. Oxidized P700 is reduced on the lumenal side of the thylakoid membrane by plastocyanin. The sequence is that of Photosystem I P700 chlorophyll a apoprotein A1 from Populus trichocarpa (Western balsam poplar).